The chain runs to 270 residues: Transcription factor PU.1 (270 aa).

The interval 124 to 162 (LSPAQPSSDEEEGERQSPPLEVSDGEADGLEPGPGLLHG) is disordered. A phosphoserine mark is found at serine 140 and serine 146. Residues 153 to 162 (LEPGPGLLHG) show a composition bias toward low complexity. Residues 170–253 (IRLYQFLLDL…VKKKLTYQFS (84 aa)) constitute a DNA-binding region (ETS). 4 residues coordinate DNA: lysine 217, arginine 230, arginine 233, and lysine 243.

The protein belongs to the ETS family. Binds DNA as a monomer. Can form homomers. Directly interacts with CEBPD/NF-IL6-beta; this interaction does not affect DNA-binding properties of each partner. Interacts with NONO/p54(nrb). Interacts with RUNX1/AML1. Interacts with GFI1; the interaction represses SPI1 transcriptional activity, hence blocks SPI1-induced macrophage differentiation of myeloid progenitor cells. Interacts with CEBPE. Interacts with IRF4/Pip and IRF8. Interacts with JUN. Interacts with RB1. Interacts with TBP.

It is found in the nucleus. Transcriptional activity at macrophage-specific genes is inhibited by interaction with GFI1, which results in the inhibition of SPI1-induced macrophage differentiation of myeloid progenitor cells, but not that of the granulocyte lineage. Pioneer transcription factor, which controls hematopoietic cell fate by decompacting stem cell heterochromatin and allowing other transcription factors to enter otherwise inaccessible genomic sites. Once in open chromatin, can directly control gene expression by binding genetic regulatory elements and can also more broadly influence transcription by recruiting transcription factors, such as interferon regulatory factors (IRFs), to otherwise inaccessible genomic regions. Transcriptionally activates genes important for myeloid and lymphoid lineages, such as CSF1R. Transcriptional activation from certain promoters, possibly containing low affinity binding sites, is achieved cooperatively with other transcription factors. FCER1A transactivation is achieved in cooperation with GATA1. May be particularly important for the pro- to pre-B cell transition. Binds (via the ETS domain) onto the purine-rich DNA core sequence 5'-GAGGAA-3', also known as the PU-box. In vitro can bind RNA and interfere with pre-mRNA splicing. This chain is Transcription factor PU.1 (SPI1), found in Sus scrofa (Pig).